A 923-amino-acid chain; its full sequence is Transportin-3 (923 aa).

The residue at position 1 (Met1) is an N-acetylmethionine. A Phosphoserine modification is found at Ser74. At Thr896 the chain carries Phosphothreonine.

Interacts with (GTP-bound) Ran. Interacts with (phosphorylated) SFRS1 and SFRS2; leading to their nuclear import. Interacts with NUP62. Interacts with RBM4. Interacts with CPSF6, promoting its nuclear import. In terms of assembly, (Microbial infection) Interacts with the HIV-1 pre-integration complex (PIC), which is composed of viral genome, matrix protein, Vpr and integrase. Interacts with HIV-1 integrase protein; the interaction is direct. As to expression, expressed in skeletal muscle.

The protein resides in the nucleus envelope. The protein localises to the cytoplasm. Importin, which transports target proteins into the nucleus. Specifically mediates the nuclear import of splicing factor serine/arginine (SR) proteins, such as RBM4, SFRS1 and SFRS2, by recognizing phosphorylated SR domains. Also mediates the nuclear import of serine/arginine (SR) protein CPSF6, independently of CPSF6 phosphorylation. The nuclear import process is regulated by the small GTPase Ran that partitions between cytoplasm and nucleus in the predominantly GDP- and GTP-bound form, respectively. Importin associates with target cargo proteins in the cytoplasm, and the competitive binding of GTP-bound Ran induces the release of cargos in the nucleus. Its function is as follows. (Microbial infection) Involved in immunodeficiency virus (HIV-1) infection by importing the pre-integration complex (PIC) into the nucleus. Required for a nuclear maturation step of HIV-1 prior to integration. This chain is Transportin-3, found in Homo sapiens (Human).